The following is a 218-amino-acid chain: 25.3 kDa vesicle transport protein SEC22-1 (218 aa).

The Cytoplasmic portion of the chain corresponds to 1–192; the sequence is MVKMTLIARV…DKAKDLNRQA (192 aa). Residues 6-120 enclose the Longin domain; it reads LIARVTDGLP…YAFIKFDTFI (115 aa). Residues 135–195 form the v-SNARE coiled-coil homology domain; it reads NIAKLNDELY…KDLNRQALIR (61 aa). Residues 193–213 form a helical; Anchor for type IV membrane protein membrane-spanning segment; that stretch reads LIRKWAPVAIVFGVVFLLFWV. Residues 214-218 lie on the Vesicular side of the membrane; it reads KNKLW.

It belongs to the synaptobrevin family. In terms of assembly, interacts with SEC24A. As to expression, mainly expressed in flowers and siliques, to a lower extent in seedlings, and barely in roots and leaves.

The protein localises to the golgi apparatus membrane. It localises to the endoplasmic reticulum membrane. Its function is as follows. V-SNARE involved in vesicle trafficking from the ER to the Golgi complex and required for early secretion. Involved in endoplasmic reticulum (ER) biogenesis and functions as well as for Golgi-stack integrity. Essential for gametophytes development. Involved in cesium Cs(+) accumulation, a non-essential cation. The sequence is that of 25.3 kDa vesicle transport protein SEC22-1 from Arabidopsis thaliana (Mouse-ear cress).